The primary structure comprises 409 residues: Nucleoprotein (409 aa).

Disordered regions lie at residues 1–32 (MASG…SSGN), 46–69 (SPPL…QQHG), 120–193 (GADT…SGAE), and 238–259 (VDQV…DKMN). A compositionally biased stretch (low complexity) spans 15-31 (PVIKLGGPKPPKVGSSG). The tract at residues 29 to 160 (SSGNASWFQA…GNFRWDFIPL (132 aa)) is RNA-binding. A CoV N NTD domain is found at 31-156 (GNASWFQAIK…GGPDGNFRWD (126 aa)). Over residues 162 to 179 (RGRSGKSTAASSAASSRA) the composition is skewed to low complexity. Basic and acidic residues-rich tracts occupy residues 180–192 (PSRE…RSGA) and 247–259 (KGKE…DKMN). S190 is modified (phosphoserine; by host). A CoV N CTD domain is found at 215–331 (TKAKADEMAH…QCVDGVGTRP (117 aa)). Residues 226 to 333 (RYCKRTIPPG…VDGVGTRPKD (108 aa)) form a dimerization region. Residues C320 and C323 are joined by a disulfide bond. Positions 327-409 (VGTRPKDDEP…GDSALGENEL (83 aa)) are disordered. Low complexity predominate over residues 341 to 354 (RSSSRPATRTSSPA). Positions 358–367 (PRPKKEKKTK) are enriched in basic residues. A compositionally biased stretch (basic and acidic residues) spans 368–384 (KQDDEVDKALTSDEERN). T378 carries the post-translational modification Phosphothreonine; by host. At S379 the chain carries Phosphoserine; by host.

The protein belongs to the gammacoronavirus nucleocapsid protein family. As to quaternary structure, homooligomer. Both monomeric and oligomeric forms interact with RNA. Interacts with protein M. Interacts with NSP3; this interaction serves to tether the genome to the newly translated replicase-transcriptase complex at a very early stage of infection. ADP-ribosylated. The ADP-ribosylation is retained in the virion during infection. In terms of processing, phosphorylated on serine and threonine residues.

Its subcellular location is the virion. The protein localises to the host endoplasmic reticulum-Golgi intermediate compartment. It is found in the host Golgi apparatus. In terms of biological role, packages the positive strand viral genome RNA into a helical ribonucleocapsid (RNP) and plays a fundamental role during virion assembly through its interactions with the viral genome and membrane protein M. Plays an important role in enhancing the efficiency of subgenomic viral RNA transcription as well as viral replication. The protein is Nucleoprotein of Gallus gallus (Chicken).